We begin with the raw amino-acid sequence, 600 residues long: Elongation factor 4 (600 aa).

One can recognise a tr-type G domain in the interval 5–187 (KYIRNFSIIA…AIVNKLPPPK (183 aa)). GTP contacts are provided by residues 17–22 (DHGKST) and 134–137 (NKLD).

This sequence belongs to the TRAFAC class translation factor GTPase superfamily. Classic translation factor GTPase family. LepA subfamily.

The protein resides in the cell inner membrane. It catalyses the reaction GTP + H2O = GDP + phosphate + H(+). Functionally, required for accurate and efficient protein synthesis under certain stress conditions. May act as a fidelity factor of the translation reaction, by catalyzing a one-codon backward translocation of tRNAs on improperly translocated ribosomes. Back-translocation proceeds from a post-translocation (POST) complex to a pre-translocation (PRE) complex, thus giving elongation factor G a second chance to translocate the tRNAs correctly. Binds to ribosomes in a GTP-dependent manner. This chain is Elongation factor 4, found in Rickettsia conorii (strain ATCC VR-613 / Malish 7).